Reading from the N-terminus, the 395-residue chain is MATVDRWLLPDGIEEVLPPEAARIEVARRQVLDLFQSWGYEFVVTPHIEYLESLLTGAGQDLDLRTFKVIDPQSGRQMGFRADITPQVARIDAHTLRREGPSRLCYAGSVLHAQPRALSSSRSPIQLGAELYGDASPSSDVEVISLMLAMLQLADVPDVHMDLGHVGIYRGLAQAAGLSGEVEQQLFDALQRKAIDEVITLTEGLPADLSGMLRALVDLCGGREVLSAARERLANAPAPVLAALEDLLAIAERLSVRFPELPLYFDLGELRGYHYHTGVVFAVFVPGVGQSIAQGGRYDDIGADFGRARPATGFSTDLKTLVTLGRAEIELPSGGIWMPDSTDAALWQQVCQLRSEGQRVVQALPGQPLAAARDADCDRQLIQQNGLWQVSPLAS.

This sequence belongs to the class-II aminoacyl-tRNA synthetase family. HisZ subfamily. In terms of assembly, heteromultimer composed of HisG and HisZ subunits.

It is found in the cytoplasm. It functions in the pathway amino-acid biosynthesis; L-histidine biosynthesis; L-histidine from 5-phospho-alpha-D-ribose 1-diphosphate: step 1/9. Functionally, required for the first step of histidine biosynthesis. May allow the feedback regulation of ATP phosphoribosyltransferase activity by histidine. In Pseudomonas fluorescens (strain Pf0-1), this protein is ATP phosphoribosyltransferase regulatory subunit.